Consider the following 143-residue polypeptide: Ribonuclease P protein component 2 (143 aa).

Belongs to the eukaryotic/archaeal RNase P protein component 2 family. In terms of assembly, consists of a catalytic RNA component and at least 4-5 protein subunits.

The protein localises to the cytoplasm. It carries out the reaction Endonucleolytic cleavage of RNA, removing 5'-extranucleotides from tRNA precursor.. Its function is as follows. Part of ribonuclease P, a protein complex that generates mature tRNA molecules by cleaving their 5'-ends. In Saccharolobus solfataricus (strain ATCC 35092 / DSM 1617 / JCM 11322 / P2) (Sulfolobus solfataricus), this protein is Ribonuclease P protein component 2.